A 171-amino-acid chain; its full sequence is MARTAPTSNEERGDGLREKMISVNRVTKVVKGGRIMGFAALTVVGDGDGGIGMGKGKSREVPVAVQKAMEEARRKLVKISLKNGTFHHTVVGQHGASRVLIQPASEGTGIIAGGAMRAVFEVMGVQNVLAKCLGSTNPYNVVRATIDGLMKMSTPSEIAAKRGKSVEDITG.

In terms of domain architecture, S5 DRBM spans 16–79 (LREKMISVNR…EEARRKLVKI (64 aa)).

The protein belongs to the universal ribosomal protein uS5 family. As to quaternary structure, part of the 30S ribosomal subunit. Contacts proteins S4 and S8.

In terms of biological role, with S4 and S12 plays an important role in translational accuracy. Located at the back of the 30S subunit body where it stabilizes the conformation of the head with respect to the body. The sequence is that of Small ribosomal subunit protein uS5 from Thiobacillus denitrificans (strain ATCC 25259 / T1).